The chain runs to 165 residues: Cyclic pyranopterin monophosphate synthase (165 aa).

Substrate contacts are provided by residues 83–85 (FCH) and 120–121 (ME). Residue aspartate 135 is part of the active site.

This sequence belongs to the MoaC family. In terms of assembly, homohexamer; trimer of dimers.

The catalysed reaction is (8S)-3',8-cyclo-7,8-dihydroguanosine 5'-triphosphate = cyclic pyranopterin phosphate + diphosphate. It functions in the pathway cofactor biosynthesis; molybdopterin biosynthesis. Catalyzes the conversion of (8S)-3',8-cyclo-7,8-dihydroguanosine 5'-triphosphate to cyclic pyranopterin monophosphate (cPMP). The polypeptide is Cyclic pyranopterin monophosphate synthase (Xanthomonas axonopodis pv. citri (strain 306)).